Reading from the N-terminus, the 367-residue chain is Anhydro-N-acetylmuramic acid kinase (367 aa).

Residue 13–20 (GTSMDGAD) participates in ATP binding.

Belongs to the anhydro-N-acetylmuramic acid kinase family.

The enzyme catalyses 1,6-anhydro-N-acetyl-beta-muramate + ATP + H2O = N-acetyl-D-muramate 6-phosphate + ADP + H(+). It functions in the pathway amino-sugar metabolism; 1,6-anhydro-N-acetylmuramate degradation. The protein operates within cell wall biogenesis; peptidoglycan recycling. Catalyzes the specific phosphorylation of 1,6-anhydro-N-acetylmuramic acid (anhMurNAc) with the simultaneous cleavage of the 1,6-anhydro ring, generating MurNAc-6-P. Is required for the utilization of anhMurNAc either imported from the medium or derived from its own cell wall murein, and thus plays a role in cell wall recycling. The polypeptide is Anhydro-N-acetylmuramic acid kinase (Neisseria meningitidis serogroup B (strain ATCC BAA-335 / MC58)).